Here is a 124-residue protein sequence, read N- to C-terminus: Small ribosomal subunit protein uS12 (124 aa).

The segment at 1–29 (MPTINQLVRRPRRPRESANKAPALQHNPQ) is disordered. Aspartate 90 carries the 3-methylthioaspartic acid modification.

It belongs to the universal ribosomal protein uS12 family. Part of the 30S ribosomal subunit. Contacts proteins S8 and S17. May interact with IF1 in the 30S initiation complex.

With S4 and S5 plays an important role in translational accuracy. In terms of biological role, interacts with and stabilizes bases of the 16S rRNA that are involved in tRNA selection in the A site and with the mRNA backbone. Located at the interface of the 30S and 50S subunits, it traverses the body of the 30S subunit contacting proteins on the other side and probably holding the rRNA structure together. The combined cluster of proteins S8, S12 and S17 appears to hold together the shoulder and platform of the 30S subunit. This is Small ribosomal subunit protein uS12 from Anaplasma marginale (strain Florida).